Consider the following 558-residue polypeptide: Kelch-like protein 23 (558 aa).

The region spanning 36–104 (TDITLQCPSG…AYTSQIEITK (69 aa)) is the BTB domain. The 102-residue stretch at 139-240 (CIGMHSFAEF…DPVYLKTALG (102 aa)) folds into the BACK domain. 6 Kelch repeats span residues 274–320 (TMYI…CLGP), 321–369 (NIYV…TLGG), 370–416 (CVYA…VLHE), 418–466 (IYVI…PFEN), 467–508 (KLYL…IMNG), and 510–557 (IYVT…CVYN).

This is Kelch-like protein 23 (Klhl23) from Mus musculus (Mouse).